A 585-amino-acid chain; its full sequence is uncharacterized protein (585 aa).

The span at 1–18 (MSALSTKLEPTNSYSESL) shows a compositional bias: polar residues. A disordered region spans residues 1–23 (MSALSTKLEPTNSYSESLPPQRR).

This sequence belongs to the protein kinase superfamily. ADCK protein kinase family.

This is an uncharacterized protein from Synechocystis sp. (strain ATCC 27184 / PCC 6803 / Kazusa).